We begin with the raw amino-acid sequence, 298 residues long: Leucine-rich repeat-containing protein 55 (298 aa).

An N-terminal signal peptide occupies residues 1-34 (MGDTWAQLPWPGPPHSALLLVFFLLAAGVMHSDA). The region spanning 35–65 (GASCPVLCTCRNQVVDCSNQRLFSVPPDLPM) is the LRRNT domain. Intrachain disulfides connect Cys38–Cys44 and Cys42–Cys51. LRR repeat units lie at residues 66–87 (DTRN…YLTC), 90–111 (ELRV…LFLH), 114–135 (RLAH…MFRE), 138–160 (GLVH…AFQG), and 163–186 (HLRD…EGLP). Residues 196–251 (NPWVCGCTMEPLLKWLRNRIQRCTADSQLAECRGPPEVEGAPLFSLTEESFKACHL) form the LRRCT domain. 2 disulfides stabilise this stretch: Cys200–Cys227 and Cys202–Cys249. Residues 259–279 (LFIAFVGFVVSIASVATNFLL) traverse the membrane as a helical segment.

In terms of assembly, interacts with KCNMA1.

It is found in the cell membrane. Auxiliary protein of the large-conductance, voltage and calcium-activated potassium channel (BK alpha). Modulates gating properties by producing a marked shift in the BK channel's voltage dependence of activation in the hyperpolarizing direction, and in the absence of calcium. In Rattus norvegicus (Rat), this protein is Leucine-rich repeat-containing protein 55 (Lrrc55).